The following is a 226-amino-acid chain: Probable septum site-determining protein MinC (226 aa).

This sequence belongs to the MinC family. As to quaternary structure, interacts with MinD and FtsZ.

Its function is as follows. Cell division inhibitor that blocks the formation of polar Z ring septums. Rapidly oscillates between the poles of the cell to destabilize FtsZ filaments that have formed before they mature into polar Z rings. Prevents FtsZ polymerization. The chain is Probable septum site-determining protein MinC from Edwardsiella ictaluri (strain 93-146).